The chain runs to 214 residues: Probable nicotinate-nucleotide adenylyltransferase (214 aa).

This sequence belongs to the NadD family.

It catalyses the reaction nicotinate beta-D-ribonucleotide + ATP + H(+) = deamido-NAD(+) + diphosphate. It functions in the pathway cofactor biosynthesis; NAD(+) biosynthesis; deamido-NAD(+) from nicotinate D-ribonucleotide: step 1/1. Its function is as follows. Catalyzes the reversible adenylation of nicotinate mononucleotide (NaMN) to nicotinic acid adenine dinucleotide (NaAD). This is Probable nicotinate-nucleotide adenylyltransferase from Buchnera aphidicola subsp. Acyrthosiphon pisum (strain Tuc7).